Consider the following 230-residue polypeptide: Ribonuclease 3 (230 aa).

In terms of domain architecture, RNase III spans histidine 5–glycine 127. Glutamate 40 provides a ligand contact to Mg(2+). Residue aspartate 44 is part of the active site. Residues aspartate 113 and glutamate 116 each coordinate Mg(2+). Glutamate 116 is a catalytic residue. One can recognise a DRBM domain in the interval aspartate 154–aspartate 224. Residues glycine 202–valine 230 are disordered.

The protein belongs to the ribonuclease III family. In terms of assembly, homodimer. Requires Mg(2+) as cofactor.

It is found in the cytoplasm. It catalyses the reaction Endonucleolytic cleavage to 5'-phosphomonoester.. In terms of biological role, digests double-stranded RNA. Involved in the processing of primary rRNA transcript to yield the immediate precursors to the large and small rRNAs (23S and 16S). Processes some mRNAs, and tRNAs when they are encoded in the rRNA operon. Processes pre-crRNA and tracrRNA of type II CRISPR loci if present in the organism. The polypeptide is Ribonuclease 3 (Methylococcus capsulatus (strain ATCC 33009 / NCIMB 11132 / Bath)).